A 275-amino-acid polypeptide reads, in one-letter code: Large ribosomal subunit protein uL2 (275 aa).

The segment at 223–275 (VAMNPVDHPHGGGEGRTSGGRHPVSPWGQPTKGYKTRSNKRTDKYIVRRRNKK) is disordered.

This sequence belongs to the universal ribosomal protein uL2 family. In terms of assembly, part of the 50S ribosomal subunit. Forms a bridge to the 30S subunit in the 70S ribosome.

One of the primary rRNA binding proteins. Required for association of the 30S and 50S subunits to form the 70S ribosome, for tRNA binding and peptide bond formation. It has been suggested to have peptidyltransferase activity; this is somewhat controversial. Makes several contacts with the 16S rRNA in the 70S ribosome. The protein is Large ribosomal subunit protein uL2 of Shewanella piezotolerans (strain WP3 / JCM 13877).